Reading from the N-terminus, the 96-residue chain is Large ribosomal subunit protein bL27 (96 aa).

A propeptide spanning residues 1-9 is cleaved from the precursor; it reads MLRLDLQFF. A disordered region spans residues 13–35; the sequence is KGVGSTKNGRDSQSKRLGAKRAD.

The protein belongs to the bacterial ribosomal protein bL27 family. The N-terminus is cleaved by ribosomal processing cysteine protease Prp.

The polypeptide is Large ribosomal subunit protein bL27 (Bacillus cereus (strain B4264)).